Consider the following 1181-residue polypeptide: Clustered mitochondria protein homolog (1181 aa).

The segment at 165–195 (AKAEALAKNEEVSEDEESEPEDDTPMKQSTQ) is disordered. A compositionally biased stretch (acidic residues) spans 176–187 (VSEDEESEPEDD). Positions 379–622 (DMARNQELLS…RLAPVDIAFL (244 aa)) constitute a Clu domain. Residues 1130–1181 (GRLARQAPKPTATHQKEAPKKASKKTKGKGKGKDDKGEKLVAELKKKKAGKR) are disordered. The span at 1150 to 1159 (KASKKTKGKG) shows a compositional bias: basic residues. Residues 1160–1173 (KGKDDKGEKLVAEL) show a composition bias toward basic and acidic residues.

The protein belongs to the CLU family. As to quaternary structure, may associate with the eukaryotic translation initiation factor 3 (eIF-3) complex.

The protein resides in the cytoplasm. Functionally, mRNA-binding protein involved in proper cytoplasmic distribution of mitochondria. In Yarrowia lipolytica (strain CLIB 122 / E 150) (Yeast), this protein is Clustered mitochondria protein homolog.